We begin with the raw amino-acid sequence, 691 residues long: Histone-lysine N-methyltransferase Set8 (691 aa).

The interval 1–29 (MIMVRRRQRPAKEAASSSSGGASSGSGIP) is disordered. Positions 14–27 (AASSSSGGASSGSG) are enriched in low complexity. A phosphoserine mark is found at S195 and S250. Position 252 is a phosphothreonine (T252). Position 281 is a phosphoserine (S281). Disordered regions lie at residues 341–363 (TANT…HRIL), 382–401 (GSAD…TTTA), 407–437 (KSRR…QQQQ), and 464–516 (AEER…ATNG). T344 is modified (phosphothreonine). Residues S346, S383, S388, and S392 each carry the phosphoserine modification. Composition is skewed to polar residues over residues 421–430 (YQPQLQKPPS) and 471–481 (NKAPATANSNK). The 122-residue stretch at 555-676 (DGLQVRHFMG…PGEELTYDYG (122 aa)) folds into the SET domain. Residues 565-567 (KGR), Y610, and 637-638 (NH) contribute to the S-adenosyl-L-methionine site.

Belongs to the class V-like SAM-binding methyltransferase superfamily. Histone-lysine methyltransferase family. PR/SET subfamily.

Its subcellular location is the nucleus. It is found in the chromosome. The enzyme catalyses L-lysyl(20)-[histone H4] + S-adenosyl-L-methionine = N(6)-methyl-L-lysyl(20)-[histone H4] + S-adenosyl-L-homocysteine + H(+). Histone methyltransferase that specifically monomethylates 'Lys-20' of histone H4. H4 'Lys-20' monomethylation is enriched during mitosis and represents a specific tag for epigenetic transcriptional repression. Mainly functions in euchromatin regions, thereby playing a central role in the silencing of euchromatic genes. Required for cell proliferation, possibly by contributing to the maintenance of proper higher-order structure of DNA and chromosome condensation during mitosis. The chain is Histone-lysine N-methyltransferase Set8 from Drosophila melanogaster (Fruit fly).